Here is a 528-residue protein sequence, read N- to C-terminus: Glucose-6-phosphate isomerase (528 aa).

Catalysis depends on E322, which acts as the Proton donor. Catalysis depends on residues H351 and K455.

The protein belongs to the GPI family.

It localises to the cytoplasm. The catalysed reaction is alpha-D-glucose 6-phosphate = beta-D-fructose 6-phosphate. Its pathway is carbohydrate biosynthesis; gluconeogenesis. It functions in the pathway carbohydrate degradation; glycolysis; D-glyceraldehyde 3-phosphate and glycerone phosphate from D-glucose: step 2/4. Catalyzes the reversible isomerization of glucose-6-phosphate to fructose-6-phosphate. The protein is Glucose-6-phosphate isomerase of Nostoc sp. (strain PCC 7120 / SAG 25.82 / UTEX 2576).